The chain runs to 199 residues: ATP-dependent Clp protease proteolytic subunit (199 aa).

The active-site Nucleophile is Ser102. His127 is a catalytic residue.

Belongs to the peptidase S14 family. As to quaternary structure, fourteen ClpP subunits assemble into 2 heptameric rings which stack back to back to give a disk-like structure with a central cavity, resembling the structure of eukaryotic proteasomes.

It is found in the cytoplasm. The enzyme catalyses Hydrolysis of proteins to small peptides in the presence of ATP and magnesium. alpha-casein is the usual test substrate. In the absence of ATP, only oligopeptides shorter than five residues are hydrolyzed (such as succinyl-Leu-Tyr-|-NHMec, and Leu-Tyr-Leu-|-Tyr-Trp, in which cleavage of the -Tyr-|-Leu- and -Tyr-|-Trp bonds also occurs).. Its function is as follows. Cleaves peptides in various proteins in a process that requires ATP hydrolysis. Has a chymotrypsin-like activity. Plays a major role in the degradation of misfolded proteins. The protein is ATP-dependent Clp protease proteolytic subunit of Pseudothermotoga lettingae (strain ATCC BAA-301 / DSM 14385 / NBRC 107922 / TMO) (Thermotoga lettingae).